A 112-amino-acid polypeptide reads, in one-letter code: uncharacterized protein (112 aa).

The protein to U.parvum UU089.1.

This is an uncharacterized protein from Synechocystis sp. (strain ATCC 27184 / PCC 6803 / Kazusa).